Here is a 202-residue protein sequence, read N- to C-terminus: Holliday junction branch migration complex subunit RuvA (202 aa).

Residues 1–64 (MFAYIRGRLE…EDVISLYGFL (64 aa)) are domain I. The interval 65-143 (TQEELNVFEL…KEQLTEYAQS (79 aa)) is domain II. The flexible linker stretch occupies residues 144–152 (EEGGKVLDT). The interval 152-202 (TDSSKMAEAVSALMVLGYSPAEANKAVSAVYREDMDIETIIKNALKGLARP) is domain III.

It belongs to the RuvA family. In terms of assembly, homotetramer. Forms an RuvA(8)-RuvB(12)-Holliday junction (HJ) complex. HJ DNA is sandwiched between 2 RuvA tetramers; dsDNA enters through RuvA and exits via RuvB. An RuvB hexamer assembles on each DNA strand where it exits the tetramer. Each RuvB hexamer is contacted by two RuvA subunits (via domain III) on 2 adjacent RuvB subunits; this complex drives branch migration. In the full resolvosome a probable DNA-RuvA(4)-RuvB(12)-RuvC(2) complex forms which resolves the HJ.

Its subcellular location is the cytoplasm. Its function is as follows. The RuvA-RuvB-RuvC complex processes Holliday junction (HJ) DNA during genetic recombination and DNA repair, while the RuvA-RuvB complex plays an important role in the rescue of blocked DNA replication forks via replication fork reversal (RFR). RuvA specifically binds to HJ cruciform DNA, conferring on it an open structure. The RuvB hexamer acts as an ATP-dependent pump, pulling dsDNA into and through the RuvAB complex. HJ branch migration allows RuvC to scan DNA until it finds its consensus sequence, where it cleaves and resolves the cruciform DNA. This Acetivibrio thermocellus (strain ATCC 27405 / DSM 1237 / JCM 9322 / NBRC 103400 / NCIMB 10682 / NRRL B-4536 / VPI 7372) (Clostridium thermocellum) protein is Holliday junction branch migration complex subunit RuvA.